The chain runs to 1189 residues: MPFGLKLRRTRRYNVLSKNCFVTRIRLLDSNVIECTLSVESTGQECLEAVAQRLELRETHYFGLWFLSKSQQARWVELEKPLKKHLDKFANEPLLFFGVMFYVPNVSRLQQEATRYQYYLQVKKDVLEGRLRCSLEQVIRLAGLAVQADFGDYNQFDSQEFLREYVLFPMDLAMEEAALEELTQKVAQEHKAHSGILPAEAELMYINEVERLDGFGQEIFPVKDSHGNSVHLGIFFMGIFVRNRVGRQAVIYRWNDIGSVTHSKAAILLELIDKEETALFHTDDIENAKYISRLFTTRHKFYKQNKICTEQSNSPPPIRRQPTWSRSSLPRQQPYILPPMHVQCSEHYSETHTSQDSIFPGNEEALYCRSHNSLDLNYLNGTVTNGSVCSVHSVNSLSCSQSFIQASPVSSNLSIPGSDIMRADYIPSHRHSTIIVPSYRPTPDYETVMRQMKRGLMHADSQSRSLRNLNIINTHAYNQPEELVYSQPEMRERHPYTVPYAHQGCYGHKLVSPSDQMNPQNCAMPIKPGASSISHTVSTPELANMQLQGAQHYSTAHMLKNYLFRPPPPYPRPRPATSTPDLASHRHKYVSGSSPDLVTRKVQLSVKTFQEDSSPVVHQSLQEVSEPLTATKHHGGGGGTVNKRHSLEVMNSMVRGMEAMTLKSLNIPMARRNTLREQGPSEETGGHEVHGLPQYHHKKTFSDATMLIHSSESEEEEETLEAAPQVPVLREKVEYSAQLQAALARIPNRPPPEYPGPRKSVSNGALRQDQGTPLPAMARCRVLRHGPSKALSVSRAEQLAVNGASLGPSISEPDLTSVKERVKKEPVKERPVSEMFSLEDSIIEREMMIRNLEKQKMTGPQAQKRPLMLAALNGLSVARVSGREDGHHDATRVPIDERLRALKKKLEDGMVFTEYEQIPNKKANGVFSTATLPENAERSRIREVVPYEENRVELIPTKENNTGYINASHIKVVVGGSEWHYIATQGPLPHTCHDFWQMVWEQGVNVIAMVTAEEEGGRTKSHRYWPKLGSKHSSATYGKFKVTTKFRTDSGCYATTGLKVKHLLSGQERTVWHLQYTDWPHHGCPEDVQGFLSYLEEIQSVRRHTNSVLEGIRTRHPPIVVHCSAGVGRTGVVILSELMIYCLEHNEKVEVPTMLRFLREQRMFMIQTIAQYKFVYQVLVQFLQNSRLI.

An FERM domain is found at Phe-21–Lys-306. Residues Ser-314, Ser-461, Ser-486, Ser-591, Ser-593, Ser-594, and Ser-646 each carry the phosphoserine modification. A disordered region spans residues Ala-744–Pro-775. The span at Ser-760–Gly-771 shows a compositional bias: polar residues. Ser-833 bears the Phosphoserine mark. Residues Val-911–Phe-1182 form the Tyrosine-protein phosphatase domain. The active-site Phosphocysteine intermediate is Cys-1123. Residues Cys-1123 to Arg-1129 and Gln-1167 contribute to the substrate site.

The protein belongs to the protein-tyrosine phosphatase family. Non-receptor class subfamily. Interacts with FLT4; the interaction is enhanced by stimulation with VEGFC. Interacts (via PPxY motifs) with YAP1 (via WW domains); this interaction leads to the cytoplasmic sequestration of YAP1 and inhibits its transcriptional coactivator activity. Post-translationally, ubiquitinated by the ECS (Elongin BC-CUL2/5-SOCS-box protein)/LRR1 E3 ligase complex and subsequently targeted to proteasomal degradation. In terms of tissue distribution, thymus; in cells of both hematopoietic and non-hematopoietic origins.

It localises to the cytoplasm. The protein localises to the cytoskeleton. The protein resides in the nucleus. The catalysed reaction is O-phospho-L-tyrosyl-[protein] + H2O = L-tyrosyl-[protein] + phosphate. In terms of biological role, protein tyrosine phosphatase which may play a role in the regulation of lymphangiogenesis, cell-cell adhesion, cell-matrix adhesion, cell migration, cell growth and also regulates TGF-beta gene expression, thereby modulating epithelial-mesenchymal transition. Mediates beta-catenin dephosphorylation at adhesion junctions. Acts as a negative regulator of the oncogenic property of YAP, a downstream target of the hippo pathway, in a cell density-dependent manner. May function as a tumor suppressor. In Mus musculus (Mouse), this protein is Tyrosine-protein phosphatase non-receptor type 14 (Ptpn14).